The chain runs to 375 residues: Matrix protein (375 aa).

Belongs to the morbillivirus/respirovirus/rubulavirus M protein family.

The protein resides in the virion. The M protein has a crucial role in virus assembly and interacts with the RNP complex as well as with the viral membrane. This chain is Matrix protein (M), found in Homo sapiens (Human).